The chain runs to 1149 residues: Translocase of chloroplast 126, chloroplastic (1149 aa).

Disordered stretches follow at residues 1 to 206 (MDAL…GKEL), 219 to 292 (NMPN…RELT), and 315 to 431 (LELK…VNPS). The span at 131–142 (LYYDDYGDDGEV) shows a compositional bias: acidic residues. Residues 152–168 (TSSSSSSSSSECSSSAS) are compositionally biased toward low complexity. Acidic residues-rich tracts occupy residues 271–280 (YDQEGEDADS) and 335–357 (GESDADADADADDEDVESGDEHE). A compositionally biased stretch (polar residues) spans 406 to 429 (TAATDTQSSNAASSTQVAGTTDVN). Residues 514-743 (DFACTILVLG…KLQDTAAPGR (230 aa)) enclose the AIG1-type G domain. Residues 523 to 530 (GKTGVGKS) form a G1 region. 526 to 531 (GVGKSA) is a binding site for GTP. Ser-530 lines the Mg(2+) pocket. A G2 region spans residues 550-554 (STTNV). Residues 570–573 (DTPG) are G3. The tract at residues 642–645 (THAS) is G4. Residues His-643 and 691 to 692 (EN) each bind GTP. Positions 691 to 693 (ENH) are G5. Disordered regions lie at residues 769-800 (KLPDEQLDESDESDDDEEDEEEGDEYDDLPPF) and 833-869 (KQHREQLQRRKEMKKRATAMRKEGLSHPADEADDEAG). Over residues 773–796 (EQLDESDESDDDEEDEEEGDEYDD) the composition is skewed to acidic residues. 2 stretches are compositionally biased toward basic and acidic residues: residues 833-842 (KQHREQLQRR) and 852-862 (MRKEGLSHPAD). Residues 1123-1144 (MVLIGIVPILRSLINCRFGFGG) form a helical membrane-spanning segment.

The protein belongs to the TRAFAC class TrmE-Era-EngA-EngB-Septin-like GTPase superfamily. AIG1/Toc34/Toc159-like paraseptin GTPase family. TOC159 subfamily. In terms of assembly, part of the TOC core complex. The cofactor is Mg(2+).

Its subcellular location is the plastid. It localises to the chloroplast outer membrane. Its function is as follows. GTPase involved in protein precursor import into chloroplasts. Seems to recognize chloroplast-destined precursor proteins and regulate their presentation to the translocation channel through GTP hydrolysis. Probably specialized in the import of nuclear encoded non-photosynthetic preproteins from the cytoplasm to the chloroplast. This is Translocase of chloroplast 126, chloroplastic from Physcomitrium patens (Spreading-leaved earth moss).